Consider the following 220-residue polypeptide: Claudin-24 (220 aa).

The Cytoplasmic segment spans residues 1–10 (MALIFRTAMQ). Residues 11–31 (SVGLLLSLLGWILSIITTYLP) form a helical membrane-spanning segment. Over 32 to 81 (HWKNLNLDLNEMENWTMGLWQTCVIQEEVGMQCKDFDSFLALPAELRVSR) the chain is Extracellular. A helical membrane pass occupies residues 82–102 (ILMFLSNGLGFLGLLVSGFGL). Topologically, residues 103 to 117 (DCLRIGESQRDLKRR) are cytoplasmic. The helical transmembrane segment at 118–138 (LLILGGILSWASGITALVPVS) threads the bilayer. Residues 139 to 161 (WVAHKTVQEFWDENVPDFVPRWE) lie on the Extracellular side of the membrane. Residues 162–182 (FGEALFLGWFAGLSLLLGGCL) form a helical membrane-spanning segment. Over 183 to 220 (LNCAACSSHAPLALGHYAVAQMQTQCPYLEDGTADPQV) the chain is Cytoplasmic.

Belongs to the claudin family.

Its subcellular location is the cell junction. The protein resides in the tight junction. The protein localises to the cell membrane. Functionally, plays a major role in tight junction-specific obliteration of the intercellular space, through calcium-independent cell-adhesion activity. This Homo sapiens (Human) protein is Claudin-24.